We begin with the raw amino-acid sequence, 762 residues long: cGMP-dependent protein kinase 2 (762 aa).

The disordered stretch occupies residues M1–A25. A lipid anchor (N-myristoyl glycine) is attached at G2. Positions T23–V85 form a coiled coil. Phosphoserine is present on residues S110 and S117. The segment at S117–K138 is disordered. Positions F168–S283 are cGMP-binding, high affinity; cAMP-binding, moderate affinity. Residues G232–A235 and R242–T243 contribute to the 3',5'-cyclic AMP site. Residues G232–A235, R242–T243, K347, G356–A359, R366–S367, D412, and R415 each bind 3',5'-cyclic GMP. The tract at residues L286–H416 is cGMP-binding, high affinity; cAMP-binding, low affinity. S431 carries the post-translational modification Phosphoserine. Positions L453–L711 constitute a Protein kinase domain. Residues L459–V467 and K482 each bind ATP. D576 functions as the Proton acceptor in the catalytic mechanism. The residue at position 609 (T609) is a Phosphothreonine. The 51-residue stretch at N712 to F762 folds into the AGC-kinase C-terminal domain. The interval Y740 to F762 is disordered.

This sequence belongs to the protein kinase superfamily. AGC Ser/Thr protein kinase family. cGMP subfamily. As to quaternary structure, interacts with GRIA1/GLUR1. In terms of processing, myristoylation mediates membrane localization. In terms of tissue distribution, highly concentrated in brain, lung and intestinal mucosa.

It is found in the apical cell membrane. It catalyses the reaction L-seryl-[protein] + ATP = O-phospho-L-seryl-[protein] + ADP + H(+). The enzyme catalyses L-threonyl-[protein] + ATP = O-phospho-L-threonyl-[protein] + ADP + H(+). Binding of cGMP results in enzyme activation. In terms of biological role, crucial regulator of intestinal secretion and bone growth. Phosphorylates and activates CFTR on the plasma membrane. Plays a key role in intestinal secretion by regulating cGMP-dependent translocation of CFTR in jejunum. Acts downstream of NMDAR to activate the plasma membrane accumulation of GRIA1/GLUR1 in synapse and increase synaptic plasticity. Phosphorylates GRIA1/GLUR1 at Ser-863. Acts as a regulator of gene expression and activator of the extracellular signal-regulated kinases MAPK3/ERK1 and MAPK1/ERK2 in mechanically stimulated osteoblasts. Under fluid shear stress, mediates ERK activation and subsequent induction of FOS, FOSL1/FRA1, FOSL2/FRA2 and FOSB that play a key role in the osteoblast anabolic response to mechanical stimulation. The chain is cGMP-dependent protein kinase 2 (PRKG2) from Homo sapiens (Human).